Consider the following 717-residue polypeptide: Eukaryotic translation initiation factor 3 subunit B (717 aa).

The tract at residues 1 to 89 (MTVEDNLDID…VFIEYETGEM (89 aa)) is sufficient for interaction with HCR1 and TIF32. The tract at residues 1-216 (MTVEDNLDID…GVQLWGGPDW (216 aa)) is sufficient for interaction with PIC8. The region spanning 28 to 115 (SFIVVDGAPV…HKLLVNKLSE (88 aa)) is the RRM domain. WD repeat units follow at residues 183-221 (RERWTETQVYWSPTGTYLVSTHTQGVQLWGGPDWAPPIC), 223-284 (FQHP…PVRT), 293-332 (GASMSWPILKFSPDDKYAARMIPGEQLSIYETETMSLLDK), 445-484 (ELKDTVTNMAWEPHGDRFVTISNSDSTTNYDGPLPANRHT), 506-549 (FDKK…DRKH), and 564-609 (SEHY…QREE).

The protein belongs to the eIF-3 subunit B family. Component of the eukaryotic translation initiation factor 3 (eIF-3) complex.

It localises to the cytoplasm. Functionally, RNA-binding component of the eukaryotic translation initiation factor 3 (eIF-3) complex, which is involved in protein synthesis of a specialized repertoire of mRNAs and, together with other initiation factors, stimulates binding of mRNA and methionyl-tRNAi to the 40S ribosome. The eIF-3 complex specifically targets and initiates translation of a subset of mRNAs involved in cell proliferation. The chain is Eukaryotic translation initiation factor 3 subunit B from Yarrowia lipolytica (strain CLIB 122 / E 150) (Yeast).